The following is a 171-amino-acid chain: Ribosome maturation factor RimP (171 aa).

This sequence belongs to the RimP family.

It localises to the cytoplasm. Functionally, required for maturation of 30S ribosomal subunits. This is Ribosome maturation factor RimP from Anaeromyxobacter sp. (strain Fw109-5).